Consider the following 616-residue polypeptide: Chaperone protein HscA (616 aa).

The protein belongs to the heat shock protein 70 family.

In terms of biological role, chaperone involved in the maturation of iron-sulfur cluster-containing proteins. Has a low intrinsic ATPase activity which is markedly stimulated by HscB. Involved in the maturation of IscU. The protein is Chaperone protein HscA of Edwardsiella ictaluri (strain 93-146).